A 123-amino-acid polypeptide reads, in one-letter code: U11/U12 small nuclear ribonucleoprotein 25 kDa protein (123 aa).

The Ubiquitin-like domain occupies 32–123 (MTVRVCKMDG…VSFIKKLRQK (92 aa)).

Component of the U11/U12 snRNPs that are part of the U12-type spliceosome.

The protein resides in the nucleus. In Mus musculus (Mouse), this protein is U11/U12 small nuclear ribonucleoprotein 25 kDa protein (Snrnp25).